A 64-amino-acid chain; its full sequence is Large ribosomal subunit protein bL35 (64 aa).

The segment at 27–47 is disordered; the sequence is MNGSHNLEKKNRKRSRRLHQA. The segment covering 36 to 45 has biased composition (basic residues); that stretch reads KNRKRSRRLH.

Belongs to the bacterial ribosomal protein bL35 family.

The polypeptide is Large ribosomal subunit protein bL35 (Chlorobium phaeobacteroides (strain DSM 266 / SMG 266 / 2430)).